The primary structure comprises 228 residues: Probable transcriptional regulatory protein SilR (228 aa).

The Response regulatory domain maps to 2 to 116; that stretch reads KILIVEDDIK…ELLARVRTLL (115 aa). 4-aspartylphosphate is present on aspartate 51. The segment at residues 125 to 225 is a DNA-binding region (ompR/PhoB-type); it reads ESQLKVADLS…VRGVGYMLEI (101 aa).

Phosphorylated by SilS.

It localises to the cytoplasm. Its function is as follows. Component of the sil cation-efflux system that confers resistance to silver. Probable member of a two-component regulatory system SilS/SilR. This is Probable transcriptional regulatory protein SilR (silR) from Salmonella typhimurium.